Here is a 541-residue protein sequence, read N- to C-terminus: Neutral amino acid transporter B(0) (541 aa).

Residue methionine 1 is modified to N-acetylmethionine. The Cytoplasmic segment spans residues 1 to 51 (MVADPPRDSKGLAAAEPTANGGLALASIEDQGAAAGGYCGSRDQVRRCLRA). A helical transmembrane segment spans residues 52–81 (NLLVLLTVVAVVAGVALGLGVSGAGGALAL). Residues 82 to 94 (GPERLSAFVFPGE) are Extracellular-facing. Residues 95-116 (LLLRLLRMIILPLVVCSLIGGA) traverse the membrane as a helical segment. Residues 117-130 (ASLDPGALGRLGAW) are Cytoplasmic-facing. A helical membrane pass occupies residues 131–153 (ALLFFLVTTLLASALGVGLALAL). Residues 154 to 224 (QPGAASAAIN…GTRVKVPVGQ (71 aa)) are Extracellular-facing. N-linked (GlcNAc...) asparagine glycans are attached at residues asparagine 163 and asparagine 212. The chain crosses the membrane as a helical span at residues 225–248 (EVEGMNILGLVVFAIVFGVALRKL). Topologically, residues 249-257 (GPEGELLIR) are cytoplasmic. A helical membrane pass occupies residues 258–285 (FFNSFNEATMVLVSWIMWYAPVGIMFLV). Residues 286 to 306 (AGKIVEMEDVGLLFARLGKYI) are Extracellular-facing. A helical transmembrane segment spans residues 307–328 (LCCLLGHAIHGLLVLPLIYFLF). At 329 to 333 (TRKNP) the chain is on the cytoplasmic side. The segment at residues 334–364 (YRFLWGIVTPLATAFGTSSSSATLPLMMKCV) is an intramembrane region (discontinuously helical). The Cytoplasmic portion of the chain corresponds to 365 to 373 (EENNGVAKH). A helical membrane pass occupies residues 374-400 (ISRFILPIGATVNMDGAALFQCVAAVF). Na(+)-binding residues include glycine 382, threonine 384, and asparagine 386. The Extracellular portion of the chain corresponds to 401–413 (IAQLSQQSLDFVK). Residues 414–447 (IITILVTATASSVGAAGIPAGGVLTLAIILEAVN) constitute an intramembrane region (discontinuously helical). The Extracellular segment spans residues 448–460 (LPVDHISLILAVD). Residues 461-482 (WLVDRSCTVLNVEGDALGAGLL) form a helical membrane-spanning segment. Na(+) is bound by residues asparagine 471 and aspartate 475. The Cytoplasmic segment spans residues 483–541 (QNYVDRTESRSTEPELIQVKSELPLDPLPVPTEEGNPLLKHYRGPAGDATVASEKESVM). Serine 493 is subject to Phosphoserine. Threonine 494 is subject to Phosphothreonine. A phosphoserine mark is found at serine 503, serine 535, and serine 539. The tract at residues 511-541 (PVPTEEGNPLLKHYRGPAGDATVASEKESVM) is disordered.

It belongs to the dicarboxylate/amino acid:cation symporter (DAACS) (TC 2.A.23) family. SLC1A5 subfamily. As to quaternary structure, homotrimer. Interacts with ERVH48-1/suppressyn; may negatively regulate syncytialization. In terms of tissue distribution, placenta, lung, skeletal muscle, kidney, pancreas, and intestine. Expressed in CD34-positive hematopoietic progenitors (at protein level).

It is found in the cell membrane. The protein localises to the melanosome. The enzyme catalyses L-glutamine(out) + L-serine(in) + Na(+)(out) = L-glutamine(in) + L-serine(out) + Na(+)(in). It catalyses the reaction L-glutamine(in) + L-serine(out) + Na(+)(out) = L-glutamine(out) + L-serine(in) + Na(+)(in). It carries out the reaction L-threonine(in) + L-glutamine(out) + Na(+)(out) = L-threonine(out) + L-glutamine(in) + Na(+)(in). The catalysed reaction is L-threonine(out) + L-glutamine(in) + Na(+)(out) = L-threonine(in) + L-glutamine(out) + Na(+)(in). The enzyme catalyses L-asparagine(in) + L-glutamine(out) + Na(+)(out) = L-asparagine(out) + L-glutamine(in) + Na(+)(in). It catalyses the reaction L-asparagine(out) + L-glutamine(in) + Na(+)(out) = L-asparagine(in) + L-glutamine(out) + Na(+)(in). It carries out the reaction L-glutamine(in) + L-alanine(out) + Na(+)(out) = L-glutamine(out) + L-alanine(in) + Na(+)(in). The catalysed reaction is L-valine(out) + L-glutamine(in) + Na(+)(out) = L-valine(in) + L-glutamine(out) + Na(+)(in). The enzyme catalyses L-glutamine(in) + L-methionine(out) + Na(+)(out) = L-glutamine(out) + L-methionine(in) + Na(+)(in). It catalyses the reaction L-glutamine(in) + L-glutamate(out) + Na(+)(out) + H(+)(out) = L-glutamine(out) + L-glutamate(in) + Na(+)(in) + H(+)(in). It carries out the reaction D-serine(in) + L-glutamine(out) + Na(+)(out) = D-serine(out) + L-glutamine(in) + Na(+)(in). The catalysed reaction is D-serine(in) + L-alanine(out) + Na(+)(out) = D-serine(out) + L-alanine(in) + Na(+)(in). The enzyme catalyses nitrate(in) = nitrate(out). It catalyses the reaction iodide(out) = iodide(in). It carries out the reaction thiocyanate(in) = thiocyanate(out). Regulated by L-cysteine, which can either inhibit substrate influx or trigger substrate efflux without being transported itself. Sodium-coupled antiporter of neutral amino acids. In a tri-substrate transport cycle, exchanges neutral amino acids between the extracellular and intracellular compartments, coupled to the inward cotransport of at least one sodium ion. The preferred substrate is the essential amino acid L-glutamine, a precursor for biosynthesis of proteins, nucleotides and amine sugars as well as an alternative fuel for mitochondrial oxidative phosphorylation. Exchanges L-glutamine with other neutral amino acids such as L-serine, L-threonine and L-asparagine in a bidirectional way. Provides L-glutamine to proliferating stem and activated cells driving the metabolic switch toward cell differentiation. The transport cycle is usually pH-independent, with the exception of L-glutamate. Transports extracellular L-glutamate coupled to the cotransport of one proton and one sodium ion in exchange for intracellular L-glutamine counter-ion. May provide for L-glutamate uptake in glial cells regulating glutamine/glutamate cycle in the nervous system. Can transport D-amino acids. Mediates D-serine release from the retinal glia potentially affecting NMDA receptor function in retinal neurons. Displays sodium- and amino acid-dependent but uncoupled channel-like anion conductance with a preference SCN(-) &gt;&gt; NO3(-) &gt; I(-) &gt; Cl(-). Through binding of the fusogenic protein syncytin-1/ERVW-1 may mediate trophoblasts syncytialization, the spontaneous fusion of their plasma membranes, an essential process in placental development. In terms of biological role, (Microbial infection) Acts as a cell surface receptor for Feline endogenous virus RD114. Its function is as follows. (Microbial infection) Acts as a cell surface receptor for Baboon M7 endogenous virus. Functionally, (Microbial infection) Acts as a cell surface receptor for type D simian retroviruses. This chain is Neutral amino acid transporter B(0), found in Homo sapiens (Human).